Consider the following 468-residue polypeptide: MDSFEDKLQQLREAFKEGRTRSAEFRAAQLQGLSHFLRDNKQQLQEALAQDLHKSAFEAEVSEIAISQAEVDLALRNLRSWMKDEKVSKNLATQLDSAFIRKEPFGLVLIIVPWNYPINLTLVPLVGAIAAGNCVVLKPSEISKATEKILAEVLPRYLDQSCFTVVLGGRQETGQLLEHKFDYIFFTGNAYVGKIVMAAAAKHLTPITLELGGKNPCYVDDNCDPQIVANRVAWFRYFNAGQTCVAPDYILCSQEMQERLVPALQNAITRFYGDNPQTSPNLGRIINQKHFKRLQGLLGCGRVAIGGQSDEGERYIAPTVLVDVQETEPVMQEEIFGPILPLVTVRSLDEAIEFMNRREKPLALYAFSKRSQVIKQVLARTSSGGFCGNDGFMHMTLSSLPFGGVGTSGMGRYHGKFSFDTFSNQRACLLRSPGMEKINDLRYPPYSSRNLRVLLVAMEERCCSCTLL.

Met1 is subject to N-acetylmethionine. NAD(+) is bound at residue 188-193 (GNAYVG). Catalysis depends on residues Glu210 and Cys244. Residues Cys462 and Cys463 are each lipidated (S-palmitoyl cysteine). Cys465 is subject to Cysteine methyl ester. Residue Cys465 is the site of S-geranylgeranyl cysteine attachment. The propeptide at 466–468 (TLL) is removed in mature form.

It belongs to the aldehyde dehydrogenase family. Post-translationally, dually lipidated in the C-terminus; prenylation occurs prior to, and is a prerequisite for palmitoylation. It is also required for activity towards long-chain substrates. As to expression, highly expressed in kidney and liver. In brain is expressed at moderate levels in cortex, striatum and hippocampus, and at lower levels in brainstem and cerebellum.

Its subcellular location is the cell membrane. The catalysed reaction is an aldehyde + NAD(+) + H2O = a carboxylate + NADH + 2 H(+). It carries out the reaction a long-chain fatty aldehyde + NAD(+) + H2O = a long-chain fatty acid + NADH + 2 H(+). The enzyme catalyses a medium-chain fatty aldehyde + NAD(+) + H2O = a medium-chain fatty acid + NADH + 2 H(+). It catalyses the reaction octanal + NAD(+) + H2O = octanoate + NADH + 2 H(+). The catalysed reaction is nonanal + NAD(+) + H2O = nonanoate + NADH + 2 H(+). It carries out the reaction hexadecanoate + NADH + 2 H(+) = hexadecanal + NAD(+) + H2O. The enzyme catalyses (2E)-octenal + NAD(+) + H2O = (2E)-octenoate + NADH + 2 H(+). It catalyses the reaction (E)-non-2-enal + NAD(+) + H2O = (E)-non-2-enoate + NADH + 2 H(+). The catalysed reaction is (E)-4-hydroxynon-2-enal + NAD(+) + H2O = (E)-4-hydroxynon-2-enoate + NADH + 2 H(+). It carries out the reaction (2E)-hexadecenal + NAD(+) + H2O = (E)-hexadec-2-enoate + NADH + 2 H(+). The enzyme catalyses benzaldehyde + NAD(+) + H2O = benzoate + NADH + 2 H(+). It catalyses the reaction an aldehyde + NADP(+) + H2O = a carboxylate + NADPH + 2 H(+). The catalysed reaction is a medium-chain fatty aldehyde + NADP(+) + H2O = a medium-chain fatty acid + NADPH + 2 H(+). It carries out the reaction hexanal + NADP(+) + H2O = hexanoate + NADPH + 2 H(+). The enzyme catalyses octanal + NADP(+) + H2O = octanoate + NADPH + 2 H(+). It catalyses the reaction nonanal + NADP(+) + H2O = nonanoate + NADPH + 2 H(+). The catalysed reaction is (2E)-octenal + NADP(+) + H2O = (2E)-octenoate + NADPH + 2 H(+). It carries out the reaction (E)-non-2-enal + NADP(+) + H2O = (E)-non-2-enoate + NADPH + 2 H(+). The enzyme catalyses (E)-4-hydroxynon-2-enal + NADP(+) + H2O = (E)-4-hydroxynon-2-enoate + NADPH + 2 H(+). It catalyses the reaction benzaldehyde + NADP(+) + H2O = benzoate + NADPH + 2 H(+). It functions in the pathway alcohol metabolism; ethanol degradation; acetate from ethanol: step 2/2. Its function is as follows. Oxidizes medium and long chain saturated and unsaturated fatty aldehydes generated in the plasma membrane into non-toxic fatty acids. May have a protective role against the cytotoxicity induced by lipid peroxidation. Short-chain fatty aldehydes are not good substrates. Can use both NADP(+) and NAD(+) as electron acceptor in vitro, however in vivo preference will depend on their tissue levels. Low activity towards acetaldehyde and 3,4-dihydroxyphenylacetaldehyde. Able to metabolize aromatic aldehydes such as benzaldehyde to their acid form. This is Aldehyde dehydrogenase family 3 member B1 (Aldh3b1) from Mus musculus (Mouse).